A 268-amino-acid chain; its full sequence is Exodeoxyribonuclease III (268 aa).

Glu34 lines the Mg(2+) pocket. Residue Tyr109 is part of the active site. Mg(2+) is bound by residues Asp151, Asn153, and Asp258. Asp151 (proton donor/acceptor) is an active-site residue.

This sequence belongs to the DNA repair enzymes AP/ExoA family. In terms of assembly, monomer. Mg(2+) is required as a cofactor. Mn(2+) serves as cofactor.

The enzyme catalyses Exonucleolytic cleavage in the 3'- to 5'-direction to yield nucleoside 5'-phosphates.. Major apurinic-apyrimidinic endonuclease of E.coli. It removes the damaged DNA at cytosines and guanines by cleaving on the 3'-side of the AP site by a beta-elimination reaction. It exhibits 3'-5'-exonuclease, 3'-phosphomonoesterase, 3'-repair diesterase and ribonuclease H activities. The polypeptide is Exodeoxyribonuclease III (xthA) (Salmonella typhi).